The chain runs to 365 residues: Holliday junction branch migration complex subunit RuvB (365 aa).

Positions 1–10 (MAIVSSNAAS) are enriched in polar residues. Residues 1–48 (MAIVSSNAASQRPRPDRGPDRVPNRVVDGARQAEDDRDPGRVGAKEDS) form a disordered region. 2 stretches are compositionally biased toward basic and acidic residues: residues 13–23 (PRPDRGPDRVP) and 31–48 (RQAEDDRDPGRVGAKEDS). The segment at 13 to 210 (PRPDRGPDRV…FGLIQRLEFY (198 aa)) is large ATPase domain (RuvB-L). ATP-binding residues include leucine 49, arginine 50, glycine 91, lysine 94, threonine 95, threonine 96, arginine 200, tyrosine 210, and arginine 247. Residue threonine 95 coordinates Mg(2+). The tract at residues 211–282 (GLEDLQAIVE…LVDEALTLHR (72 aa)) is small ATPAse domain (RuvB-S). Residues 285–365 (GRGLDASDRR…GWPYPQEQAA (81 aa)) are head domain (RuvB-H). The DNA site is built by arginine 340 and arginine 345.

Belongs to the RuvB family. As to quaternary structure, homohexamer. Forms an RuvA(8)-RuvB(12)-Holliday junction (HJ) complex. HJ DNA is sandwiched between 2 RuvA tetramers; dsDNA enters through RuvA and exits via RuvB. An RuvB hexamer assembles on each DNA strand where it exits the tetramer. Each RuvB hexamer is contacted by two RuvA subunits (via domain III) on 2 adjacent RuvB subunits; this complex drives branch migration. In the full resolvosome a probable DNA-RuvA(4)-RuvB(12)-RuvC(2) complex forms which resolves the HJ.

Its subcellular location is the cytoplasm. It catalyses the reaction ATP + H2O = ADP + phosphate + H(+). Functionally, the RuvA-RuvB-RuvC complex processes Holliday junction (HJ) DNA during genetic recombination and DNA repair, while the RuvA-RuvB complex plays an important role in the rescue of blocked DNA replication forks via replication fork reversal (RFR). RuvA specifically binds to HJ cruciform DNA, conferring on it an open structure. The RuvB hexamer acts as an ATP-dependent pump, pulling dsDNA into and through the RuvAB complex. RuvB forms 2 homohexamers on either side of HJ DNA bound by 1 or 2 RuvA tetramers; 4 subunits per hexamer contact DNA at a time. Coordinated motions by a converter formed by DNA-disengaged RuvB subunits stimulates ATP hydrolysis and nucleotide exchange. Immobilization of the converter enables RuvB to convert the ATP-contained energy into a lever motion, pulling 2 nucleotides of DNA out of the RuvA tetramer per ATP hydrolyzed, thus driving DNA branch migration. The RuvB motors rotate together with the DNA substrate, which together with the progressing nucleotide cycle form the mechanistic basis for DNA recombination by continuous HJ branch migration. Branch migration allows RuvC to scan DNA until it finds its consensus sequence, where it cleaves and resolves cruciform DNA. In Synechococcus sp. (strain WH7803), this protein is Holliday junction branch migration complex subunit RuvB.